The chain runs to 501 residues: Ell-associated factor Eaf (501 aa).

Polar residues-rich tracts occupy residues 138-149 (NMGQGQLHSQGA) and 173-192 (ENSTMRISTKTKVSTGSRRN). 2 disordered regions span residues 138–226 (NMGQ…PAWD) and 256–501 (GHAN…DDDD). Low complexity-rich tracts occupy residues 200–221 (RNSPMQQSSPSRPVPVHRSPQS) and 256–270 (GHANTSGSSTGSATG). At serine 202 the chain carries Phosphoserine. Over residues 271–283 (QTDFGSISSSSHI) the composition is skewed to polar residues. Low complexity-rich tracts occupy residues 302-314 (QRQSPPMAQQQQP) and 329-343 (QQQRQRNSPQQQRPP). Over residues 393-408 (DSSDSDSGSDSDDSTE) the composition is skewed to acidic residues. Low complexity-rich tracts occupy residues 416–437 (QQPVYQNQNHQQQQMAQQHLNQ), 455–471 (QQQQQQMVPHQQQQKQQ), and 483–501 (NDLLQNDLQLSSNSSDDDD).

The protein belongs to the EAF family.

The protein localises to the nucleus. In terms of biological role, promotes transcriptional elongation by Su(Tpl)/ELL. Essential for development. In Drosophila yakuba (Fruit fly), this protein is Ell-associated factor Eaf.